The chain runs to 309 residues: Ribonuclease Z (309 aa).

Zn(2+)-binding residues include His61, His63, Asp65, His66, His144, Asp212, and His271. Residue Asp65 is the Proton acceptor of the active site.

Belongs to the RNase Z family. Homodimer. Zn(2+) is required as a cofactor.

The enzyme catalyses Endonucleolytic cleavage of RNA, removing extra 3' nucleotides from tRNA precursor, generating 3' termini of tRNAs. A 3'-hydroxy group is left at the tRNA terminus and a 5'-phosphoryl group is left at the trailer molecule.. Its function is as follows. Zinc phosphodiesterase, which displays some tRNA 3'-processing endonuclease activity. Probably involved in tRNA maturation, by removing a 3'-trailer from precursor tRNA. The sequence is that of Ribonuclease Z from Clostridium acetobutylicum (strain ATCC 824 / DSM 792 / JCM 1419 / IAM 19013 / LMG 5710 / NBRC 13948 / NRRL B-527 / VKM B-1787 / 2291 / W).